Reading from the N-terminus, the 476-residue chain is Adenosylhomocysteinase (476 aa).

Residues Thr61, Asp140, and Glu200 each contribute to the substrate site. Residue 201 to 203 (TTT) participates in NAD(+) binding. Substrate-binding residues include Lys230 and Asp234. NAD(+)-binding positions include Asn235, 264–269 (GYGDVG), Glu287, Asn322, 343–345 (IGH), and Asn389.

This sequence belongs to the adenosylhomocysteinase family. NAD(+) serves as cofactor.

It localises to the cytoplasm. The enzyme catalyses S-adenosyl-L-homocysteine + H2O = L-homocysteine + adenosine. It functions in the pathway amino-acid biosynthesis; L-homocysteine biosynthesis; L-homocysteine from S-adenosyl-L-homocysteine: step 1/1. May play a key role in the regulation of the intracellular concentration of adenosylhomocysteine. The sequence is that of Adenosylhomocysteinase from Acidovorax ebreus (strain TPSY) (Diaphorobacter sp. (strain TPSY)).